Here is a 109-residue protein sequence, read N- to C-terminus: Aquaporin-2 (109 aa).

The Cytoplasmic portion of the chain corresponds to 1–6 (SIAFSR). The chain crosses the membrane as a helical span at residues 7-27 (AVFSEFLATLLFVFFGLGSAL). Over 28–35 (NWPQALPS) the chain is Extracellular. Residues 36–54 (VLQIAMAFGLAIGTLVQTL) traverse the membrane as a helical segment. Residues 55 to 59 (GHISG) lie on the Cytoplasmic side of the membrane. Residues 60–69 (AHINPAVTVA) constitute an intramembrane region (discontinuously helical). The short motif at 63-65 (NPA) is the NPA 1 element. Residues 70-80 (CLVGCHVSFLR) are Cytoplasmic-facing. Residues 81 to 102 (ATFYVAAQLLGAVAGAALLHEL) form a helical membrane-spanning segment. The Extracellular portion of the chain corresponds to 103-109 (TPPDIRG).

This sequence belongs to the MIP/aquaporin (TC 1.A.8) family. In terms of assembly, homotetramer. Serine phosphorylation is necessary and sufficient for expression at the apical membrane. Endocytosis is not phosphorylation-dependent. Post-translationally, N-glycosylated.

The protein localises to the apical cell membrane. Its subcellular location is the basolateral cell membrane. The protein resides in the cell membrane. It localises to the cytoplasmic vesicle membrane. It is found in the golgi apparatus. The protein localises to the trans-Golgi network membrane. It carries out the reaction H2O(in) = H2O(out). The catalysed reaction is glycerol(in) = glycerol(out). Its function is as follows. Forms a water-specific channel that provides the plasma membranes of renal collecting duct with high permeability to water, thereby permitting water to move in the direction of an osmotic gradient. Plays an essential role in renal water homeostasis. Could also be permeable to glycerol. This Amblysomus hottentotus (Hottentot golden mole) protein is Aquaporin-2.